Consider the following 196-residue polypeptide: Transmembrane 4 L6 family member 5 (196 aa).

Residues 1-9 lie on the Cytoplasmic side of the membrane; the sequence is MCTGKCARF. Residues 10 to 30 traverse the membrane as a helical segment; the sequence is VGLSLIPLSLVCIVANALLLV. The Extracellular portion of the chain corresponds to 31–45; it reads PNGQTTWTKDHLSLQ. A helical membrane pass occupies residues 46 to 66; the sequence is VWLMAGFVGGGLMVLCPGISA. Over 67–89 the chain is Cytoplasmic; the sequence is VRAGGKGCCGAGCCGNRCRMLRS. Residues 90-110 traverse the membrane as a helical segment; that stretch reads VFCSAIGLLGAIYCLSVSGTG. The interaction with MTOR and CASTOR1 stretch occupies residues 90–196; the sequence is VFCSAIGLLG…DCRKKQGSSQ (107 aa). Topologically, residues 111-156 are extracellular; that stretch reads LRIGPQCLMNGSWDYHFQDTAGSYLLNRTQWNLCVEPPDVVLWNVT. N-linked (GlcNAc...) asparagine glycosylation is present at Asn120. Residue 123 to 128 coordinates L-arginine; that stretch reads WDYHFQ. Residues Asn137 and Asn154 are each glycosylated (N-linked (GlcNAc...) asparagine). Residues 157–177 form a helical membrane-spanning segment; sequence LFSLLVAASCLEILLCGVQLV. At 178–196 the chain is on the cytoplasmic side; sequence NASIGVLCGDCRKKQGSSQ.

This sequence belongs to the L6 tetraspanin family. In terms of assembly, interacts with MTOR; the interaction is positively regulated by arginine and is negatively regulated by leucine. Interacts with SLC38A9. Interacts with SLC7A1; the interaction is negatively regulated by arginine. Interacts with CASTOR1; the interaction is positively regulated by leucine and is negatively regulated by arginine.

The protein resides in the lysosome membrane. It localises to the cell membrane. In terms of biological role, acts as a lysosomal membrane arginine sensor. Forms a complex with MTOR and SLC38A9 on lysosomal membranes in an arginine-regulated manner, leading to arginine efflux which enables the activation of mTORC1 which subsequently leads to RPS6KB1 and EIF4EBP1 phosphorylations. Facilitates cell cycle G1/S phase progression and the translocation of the CDK4-CCND1 complex into the nucleus. CDKN1B and RHOA/ROCK signaling activity are involved in TM4SF5-mediated acceleration of G1/S phase progression. The chain is Transmembrane 4 L6 family member 5 (TM4SF5) from Bos taurus (Bovine).